Consider the following 123-residue polypeptide: Small ribosomal subunit protein uS12 (123 aa).

The interval 1-31 is disordered; that stretch reads MPTIQQLVRKGRHSKKAKVATAGLKGSPQRR. A compositionally biased stretch (basic residues) spans 9–18; that stretch reads RKGRHSKKAK. At Asp89 the chain carries 3-methylthioaspartic acid.

The protein belongs to the universal ribosomal protein uS12 family. As to quaternary structure, part of the 30S ribosomal subunit. Contacts proteins S8 and S17. May interact with IF1 in the 30S initiation complex.

With S4 and S5 plays an important role in translational accuracy. In terms of biological role, interacts with and stabilizes bases of the 16S rRNA that are involved in tRNA selection in the A site and with the mRNA backbone. Located at the interface of the 30S and 50S subunits, it traverses the body of the 30S subunit contacting proteins on the other side and probably holding the rRNA structure together. The combined cluster of proteins S8, S12 and S17 appears to hold together the shoulder and platform of the 30S subunit. This Corynebacterium aurimucosum (strain ATCC 700975 / DSM 44827 / CIP 107346 / CN-1) (Corynebacterium nigricans) protein is Small ribosomal subunit protein uS12.